The following is a 365-amino-acid chain: Peptide chain release factor 2 (365 aa).

Gln252 bears the N5-methylglutamine mark.

It belongs to the prokaryotic/mitochondrial release factor family. Post-translationally, methylated by PrmC. Methylation increases the termination efficiency of RF2.

The protein localises to the cytoplasm. Its function is as follows. Peptide chain release factor 2 directs the termination of translation in response to the peptide chain termination codons UGA and UAA. This chain is Peptide chain release factor 2, found in Proteus mirabilis (strain HI4320).